Reading from the N-terminus, the 355-residue chain is Erythronate-4-phosphate dehydrogenase (355 aa).

2 residues coordinate substrate: serine 45 and threonine 66. Aspartate 146 is a binding site for NAD(+). Arginine 206 is a catalytic residue. Aspartate 229 serves as a coordination point for NAD(+). Residue glutamate 234 is part of the active site. Histidine 251 (proton donor) is an active-site residue. Glycine 254 serves as a coordination point for NAD(+). Tyrosine 255 lines the substrate pocket.

The protein belongs to the D-isomer specific 2-hydroxyacid dehydrogenase family. PdxB subfamily. In terms of assembly, homodimer.

It localises to the cytoplasm. The enzyme catalyses 4-phospho-D-erythronate + NAD(+) = (R)-3-hydroxy-2-oxo-4-phosphooxybutanoate + NADH + H(+). It functions in the pathway cofactor biosynthesis; pyridoxine 5'-phosphate biosynthesis; pyridoxine 5'-phosphate from D-erythrose 4-phosphate: step 2/5. Catalyzes the oxidation of erythronate-4-phosphate to 3-hydroxy-2-oxo-4-phosphonooxybutanoate. In Acinetobacter baumannii (strain ACICU), this protein is Erythronate-4-phosphate dehydrogenase.